The sequence spans 402 residues: MKLMTMPSEFQKALPILTKIKEAGYEAYFVGGSVRDVLLERPIHDVDIATSSYPEETKAIFNRTVDVGIEHGTVLVLENGGEYEITTFRTEDVYVDYRRPSQVSFVRSLEEDLKRRDFTVNALALDENGQVIDKFRGLIDLKQKRLRAVGKAEERFEEDALRIMRGFRFAASLDFDIEAATFEAMRSHSPLLEKISVERSFTEFDKLLMAPHWRKGISAMIACQAYDYLPGLKQQEAGLNHLIVSLKDNFTFSDHHQAWAYVMISLAIEDPKSFLKAWKTSNDFQRYVTKLIALYRIRQERSFEKLDIYQYGKEMASLVEDLRKAQSLSVDMDRINTLDQALVIHDKHDIVLNGSHLIKDFGMKPGPQLGLMLEKVELAIVEGRLDNDFTTIEAFVREELAP.

G32 and R35 together coordinate ATP. The CTP site is built by G32 and R35. Mg(2+) contacts are provided by D45 and D47. ATP-binding residues include R116, D159, R162, R165, and R168. Residues R116, D159, R162, R165, and R168 each contribute to the CTP site.

It belongs to the tRNA nucleotidyltransferase/poly(A) polymerase family. Bacterial CCA-adding enzyme type 3 subfamily. As to quaternary structure, homodimer. Mg(2+) is required as a cofactor.

It catalyses the reaction a tRNA precursor + 2 CTP + ATP = a tRNA with a 3' CCA end + 3 diphosphate. The enzyme catalyses a tRNA with a 3' CCA end + 2 CTP + ATP = a tRNA with a 3' CCACCA end + 3 diphosphate. Catalyzes the addition and repair of the essential 3'-terminal CCA sequence in tRNAs without using a nucleic acid template. Adds these three nucleotides in the order of C, C, and A to the tRNA nucleotide-73, using CTP and ATP as substrates and producing inorganic pyrophosphate. tRNA 3'-terminal CCA addition is required both for tRNA processing and repair. Also involved in tRNA surveillance by mediating tandem CCA addition to generate a CCACCA at the 3' terminus of unstable tRNAs. While stable tRNAs receive only 3'-terminal CCA, unstable tRNAs are marked with CCACCA and rapidly degraded. The sequence is that of CCA-adding enzyme from Streptococcus pyogenes serotype M6 (strain ATCC BAA-946 / MGAS10394).